The following is a 334-amino-acid chain: Glycerol-3-phosphate dehydrogenase [NAD(P)+] (334 aa).

NADPH is bound by residues W13, R33, and K106. K106, G137, and S139 together coordinate sn-glycerol 3-phosphate. A141 provides a ligand contact to NADPH. Positions 192, 245, 255, 256, and 257 each coordinate sn-glycerol 3-phosphate. K192 functions as the Proton acceptor in the catalytic mechanism. NADPH is bound at residue R256. Residues V280 and E282 each contribute to the NADPH site.

It belongs to the NAD-dependent glycerol-3-phosphate dehydrogenase family.

The protein resides in the cytoplasm. The catalysed reaction is sn-glycerol 3-phosphate + NAD(+) = dihydroxyacetone phosphate + NADH + H(+). The enzyme catalyses sn-glycerol 3-phosphate + NADP(+) = dihydroxyacetone phosphate + NADPH + H(+). The protein operates within membrane lipid metabolism; glycerophospholipid metabolism. In terms of biological role, catalyzes the reduction of the glycolytic intermediate dihydroxyacetone phosphate (DHAP) to sn-glycerol 3-phosphate (G3P), the key precursor for phospholipid synthesis. The protein is Glycerol-3-phosphate dehydrogenase [NAD(P)+] of Chlamydia trachomatis serovar L2b (strain UCH-1/proctitis).